The primary structure comprises 306 residues: NADH-cytochrome b5 reductase 2-B (306 aa).

A helical membrane pass occupies residues 12–32 (PLLLSSGIAVTAAAAVYFSTG). The FAD-binding FR-type domain occupies 53–157 (STWVDLPLVK…TGPIVKYEWK (105 aa)). Residue 160 to 195 (KFDSVTLLGAGSGITPLYQLMGSILSNPEDKTKINL) coordinates FAD.

It belongs to the flavoprotein pyridine nucleotide cytochrome reductase family. FAD serves as cofactor.

It localises to the mitochondrion outer membrane. The catalysed reaction is 2 Fe(III)-[cytochrome b5] + NADH = 2 Fe(II)-[cytochrome b5] + NAD(+) + H(+). In terms of biological role, may mediate the reduction of outer membrane cytochrome b5. In Vanderwaltozyma polyspora (strain ATCC 22028 / DSM 70294 / BCRC 21397 / CBS 2163 / NBRC 10782 / NRRL Y-8283 / UCD 57-17) (Kluyveromyces polysporus), this protein is NADH-cytochrome b5 reductase 2-B (MCR1B).